Reading from the N-terminus, the 88-residue chain is Small ribosomal subunit protein uS15 (88 aa).

It belongs to the universal ribosomal protein uS15 family. As to quaternary structure, part of the 30S ribosomal subunit. Forms a bridge to the 50S subunit in the 70S ribosome, contacting the 23S rRNA.

One of the primary rRNA binding proteins, it binds directly to 16S rRNA where it helps nucleate assembly of the platform of the 30S subunit by binding and bridging several RNA helices of the 16S rRNA. Its function is as follows. Forms an intersubunit bridge (bridge B4) with the 23S rRNA of the 50S subunit in the ribosome. In Acidovorax sp. (strain JS42), this protein is Small ribosomal subunit protein uS15.